The primary structure comprises 149 residues: uncharacterized protein (149 aa).

3 helical membrane passes run 39–61 (VPLG…LIIG), 82–104 (VFGY…GAIL), and 119–141 (WMMM…SIYL).

It to M.pneumoniae MPN_090.

Its subcellular location is the cell membrane. This is an uncharacterized protein from Mycoplasma pneumoniae (strain ATCC 29342 / M129 / Subtype 1) (Mycoplasmoides pneumoniae).